We begin with the raw amino-acid sequence, 361 residues long: Phosphoserine aminotransferase (361 aa).

R42 is a binding site for L-glutamate. Residues 76-77 (AR), W102, T153, D173, and Q196 each bind pyridoxal 5'-phosphate. An N6-(pyridoxal phosphate)lysine modification is found at K197. 238–239 (NT) is a binding site for pyridoxal 5'-phosphate.

This sequence belongs to the class-V pyridoxal-phosphate-dependent aminotransferase family. SerC subfamily. In terms of assembly, homodimer. Requires pyridoxal 5'-phosphate as cofactor.

The protein localises to the cytoplasm. It carries out the reaction O-phospho-L-serine + 2-oxoglutarate = 3-phosphooxypyruvate + L-glutamate. The catalysed reaction is 4-(phosphooxy)-L-threonine + 2-oxoglutarate = (R)-3-hydroxy-2-oxo-4-phosphooxybutanoate + L-glutamate. It functions in the pathway amino-acid biosynthesis; L-serine biosynthesis; L-serine from 3-phospho-D-glycerate: step 2/3. The protein operates within cofactor biosynthesis; pyridoxine 5'-phosphate biosynthesis; pyridoxine 5'-phosphate from D-erythrose 4-phosphate: step 3/5. Catalyzes the reversible conversion of 3-phosphohydroxypyruvate to phosphoserine and of 3-hydroxy-2-oxo-4-phosphonooxybutanoate to phosphohydroxythreonine. The sequence is that of Phosphoserine aminotransferase from Mannheimia succiniciproducens (strain KCTC 0769BP / MBEL55E).